The chain runs to 165 residues: Fibrinogen-binding protein (165 aa).

Residues 1–29 form the signal peptide; it reads MKNKLIAKSLLTIAAIGITTTTIASTADA.

Interacts with host fibrinogen alpha chain/FGA. Interacts with host complement protein C3.

It localises to the secreted. Its function is as follows. Extracellular fibrinogen-binding protein that plays an important role in virulence. By interacting with the alpha chain of fibrinogen and its derivative fibrin, enhances a non-functional interaction between fibrinogen and platelets and is responsible for repression of fibrinogen-dependent platelet aggregation. In addition, assembles a fibrinogen protective shield around the bacteria which results in impaired phagocytic clearance by the host. Mechanistically, interacts with host complement C3b deposited on the surface of the bacterium via its C-terminal and then recruits fibrinogen via its N-terminal. In Staphylococcus aureus, this protein is Fibrinogen-binding protein (fib).